The chain runs to 139 residues: MPLMPKRTKHRKMQKGQFAGLSKGANFVHFGEYGIQVLERGWITNQQIEACRVAINRFFQRRGKVWIRIFPDKPITKKPAEVRMGKGKGAVDHWVAVVRPGRILFEVANVPKDMAQSALRRAAAKLGLKTRFVERVEQV.

The protein belongs to the universal ribosomal protein uL16 family. Part of the 50S ribosomal subunit.

In terms of biological role, binds 23S rRNA and is also seen to make contacts with the A and possibly P site tRNAs. This is Large ribosomal subunit protein uL16 from Protochlamydia amoebophila (strain UWE25).